We begin with the raw amino-acid sequence, 296 residues long: Giardin subunit alpha-4 (296 aa).

Annexin repeat units lie at residues 3–72, 74–146, 153–223, and 226–294; these read ATVS…VHAW, SRFE…GWVK, KSIK…AHHW, and DPGQ…VFWR.

It belongs to the annexin family. Giardin subunit alpha subfamily.

Its subcellular location is the cytoplasm. It is found in the cytoskeleton. Giardins are involved in parasite attachment to the intestinal mucosa and in the cytoskeletal disassembly and reassembly that marks the transition from infectious trophozoite to transmissible cyst. They may interact with other cytoskeletal proteins such as microtubules in the microribbons or crossbridges, to maintain the integrity of the ventral disk. This Giardia intestinalis (Giardia lamblia) protein is Giardin subunit alpha-4.